The sequence spans 669 residues: DNA ligase (669 aa).

35–39 (DFEYD) contacts NAD(+). The tract at residues 52-71 (YPEWDSPDSPTHRVGSDKTE) is disordered. The span at 61-71 (PTHRVGSDKTE) shows a compositional bias: basic and acidic residues. NAD(+) contacts are provided by residues 84–85 (SL) and glutamate 115. Lysine 117 functions as the N6-AMP-lysine intermediate in the catalytic mechanism. NAD(+)-binding residues include arginine 138, glutamate 175, lysine 290, and lysine 314. Cysteine 408, cysteine 411, cysteine 426, and cysteine 432 together coordinate Zn(2+). In terms of domain architecture, BRCT spans 590–669 (AVSNRLAGKT…EEEFLRLIEE (80 aa)).

This sequence belongs to the NAD-dependent DNA ligase family. LigA subfamily. Requires Mg(2+) as cofactor. It depends on Mn(2+) as a cofactor.

It carries out the reaction NAD(+) + (deoxyribonucleotide)n-3'-hydroxyl + 5'-phospho-(deoxyribonucleotide)m = (deoxyribonucleotide)n+m + AMP + beta-nicotinamide D-nucleotide.. DNA ligase that catalyzes the formation of phosphodiester linkages between 5'-phosphoryl and 3'-hydroxyl groups in double-stranded DNA using NAD as a coenzyme and as the energy source for the reaction. It is essential for DNA replication and repair of damaged DNA. This chain is DNA ligase, found in Porphyromonas gingivalis (strain ATCC BAA-308 / W83).